The sequence spans 688 residues: MIOREX complex component 1 (688 aa).

Residues 1-24 form a disordered region; it reads MGLKITKGQLRTKDLNQSSSKSSQ. The transit peptide at 1–46 directs the protein to the mitochondrion; the sequence is MGLKITKGQLRTKDLNQSSSKSSQSSRIGVDTCIFTRMLPRINTAI.

As to quaternary structure, associates with the mitochondrial ribosome.

It is found in the mitochondrion. Its function is as follows. Component of MIOREX complexes, large expressome-like assemblies of ribosomes with factors involved in all the steps of post-transcriptional gene expression. The protein is MIOREX complex component 1 of Saccharomyces cerevisiae (strain ATCC 204508 / S288c) (Baker's yeast).